The primary structure comprises 183 residues: Hypoxanthine/guanine phosphoribosyltransferase (183 aa).

This sequence belongs to the purine/pyrimidine phosphoribosyltransferase family. Archaeal HPRT subfamily. As to quaternary structure, homodimer.

The protein resides in the cytoplasm. The catalysed reaction is IMP + diphosphate = hypoxanthine + 5-phospho-alpha-D-ribose 1-diphosphate. It carries out the reaction GMP + diphosphate = guanine + 5-phospho-alpha-D-ribose 1-diphosphate. It functions in the pathway purine metabolism; IMP biosynthesis via salvage pathway; IMP from hypoxanthine: step 1/1. Functionally, catalyzes a salvage reaction resulting in the formation of IMP that is energically less costly than de novo synthesis. The polypeptide is Hypoxanthine/guanine phosphoribosyltransferase (Methanocaldococcus infernus (strain DSM 11812 / JCM 15783 / ME)).